The sequence spans 400 residues: Putative F-box protein At1g30920 (400 aa).

Residues 4 to 49 enclose the F-box domain; it reads EENTDSIPIDLILDILSRLPSKSIARCRCVSKLWESMIRQSYFTEL.

This is Putative F-box protein At1g30920 from Arabidopsis thaliana (Mouse-ear cress).